Reading from the N-terminus, the 429-residue chain is Probable M18 family aminopeptidase 2 (429 aa).

Residues His82, His156, and His401 each contribute to the Zn(2+) site.

Belongs to the peptidase M18 family. The cofactor is Zn(2+).

This chain is Probable M18 family aminopeptidase 2, found in Pseudomonas putida (strain ATCC 47054 / DSM 6125 / CFBP 8728 / NCIMB 11950 / KT2440).